A 705-amino-acid chain; its full sequence is Rab guanine nucleotide exchange factor sec2 (705 aa).

Positions 144–285 form a coiled coil; sequence QTTLDDNLVA…KSVMQGMNIA (142 aa).

The protein belongs to the SEC2 family.

Its function is as follows. Guanine nucleotide exchange factor that plays an important role in regulating the growth and virulence, probably by regulating the autophagy pathway. Affects the sensitivity to cell wall disruptors and the cell wall thickness by regulating the expression levels of the cell wall integrity (CWI) pathway genes, thus coordinating the growth and virulence. Positively regulates the autophagy pathway to enhance the expression of CWI pathway genes in the presence of autophagy inducers. This Aspergillus fumigatus (strain ATCC MYA-4609 / CBS 101355 / FGSC A1100 / Af293) (Neosartorya fumigata) protein is Rab guanine nucleotide exchange factor sec2.